The chain runs to 209 residues: N-(5'-phosphoribosyl)anthranilate isomerase (209 aa).

The protein belongs to the TrpF family.

The catalysed reaction is N-(5-phospho-beta-D-ribosyl)anthranilate = 1-(2-carboxyphenylamino)-1-deoxy-D-ribulose 5-phosphate. It participates in amino-acid biosynthesis; L-tryptophan biosynthesis; L-tryptophan from chorismate: step 3/5. In Pelobacter propionicus (strain DSM 2379 / NBRC 103807 / OttBd1), this protein is N-(5'-phosphoribosyl)anthranilate isomerase.